The chain runs to 138 residues: Translation initiation factor IF-1, chloroplastic (138 aa).

Residues 1-53 (MFTSLHTPILHPRYCHHPTPSCTQFSPLALPPFHRTLSFLAPPPLLPAAPALS) constitute a chloroplast transit peptide. In terms of domain architecture, S1-like spans 58–133 (AKPDKSGEQK…SKGRIVYRLR (76 aa)).

This sequence belongs to the IF-1 family. In terms of assembly, component of the 30S ribosomal translation pre-initiation complex which assembles on the 30S ribosome in the order IF-2 and IF-3, IF-1 and N-formylmethionyl-tRNA(fMet); mRNA recruitment can occur at any time during PIC assembly.

The protein resides in the plastid. The protein localises to the chloroplast. Functionally, one of the essential components for the initiation of protein synthesis. Stabilizes the binding of IF-2 and IF-3 on the 30S subunit to which N-formylmethionyl-tRNA(fMet) subsequently binds. Helps modulate mRNA selection, yielding the 30S pre-initiation complex (PIC). Upon addition of the 50S ribosomal subunit IF-1, IF-2 and IF-3 are released leaving the mature 70S translation initiation complex. The polypeptide is Translation initiation factor IF-1, chloroplastic (infA) (Glycine max (Soybean)).